Consider the following 842-residue polypeptide: Type VI secretion system spike protein VgrG2a (842 aa).

A disordered region spans residues 265–291 (RSGAGRPFSESRLRGHRRDARVASVSG).

It belongs to the VgrG protein family.

Part of the H2 type VI secretion system (H2-T6SS) specialized secretion system, which delivers several virulence factors in both prokaryotic and eukaryotic cells during infection. May form the spike at the tip of the elongating tube formed by haemolysin co-regulated protein 2a/Hcp2a. In turn, may allow the delivery of the Tle4 antibacterial toxin to target cells where it exerts its toxicity. Also promotes the release of VgrG2b toxin to the host cell. This is Type VI secretion system spike protein VgrG2a from Pseudomonas aeruginosa (strain ATCC 15692 / DSM 22644 / CIP 104116 / JCM 14847 / LMG 12228 / 1C / PRS 101 / PAO1).